A 254-amino-acid polypeptide reads, in one-letter code: Dihydroorotate dehydrogenase B (NAD(+)), electron transfer subunit (254 aa).

Residues 1–99 (MLQTEMKVIQ…LGPLGKGFDL (99 aa)) form the FAD-binding FR-type domain. FAD is bound by residues 50–53 (RPIS), 67–69 (LYR), and 74–75 (GT). [2Fe-2S] cluster is bound by residues C218, C223, C226, and C241.

It belongs to the PyrK family. Heterotetramer of 2 PyrK and 2 PyrD type B subunits. Requires [2Fe-2S] cluster as cofactor. The cofactor is FAD.

The protein operates within pyrimidine metabolism; UMP biosynthesis via de novo pathway; orotate from (S)-dihydroorotate (NAD(+) route): step 1/1. Its function is as follows. Responsible for channeling the electrons from the oxidation of dihydroorotate from the FMN redox center in the PyrD type B subunit to the ultimate electron acceptor NAD(+). The polypeptide is Dihydroorotate dehydrogenase B (NAD(+)), electron transfer subunit (Listeria innocua serovar 6a (strain ATCC BAA-680 / CLIP 11262)).